A 446-amino-acid chain; its full sequence is Probable D-serine dehydratase (446 aa).

Lys-118 is subject to N6-(pyridoxal phosphate)lysine.

Belongs to the serine/threonine dehydratase family. DsdA subfamily. It depends on pyridoxal 5'-phosphate as a cofactor.

The enzyme catalyses D-serine = pyruvate + NH4(+). This chain is Probable D-serine dehydratase, found in Ectopseudomonas mendocina (strain ymp) (Pseudomonas mendocina).